The primary structure comprises 673 residues: UvrABC system protein B (673 aa).

A Helicase ATP-binding domain is found at 26–183; that stretch reads EGLEDGLAHQ…RRLAELQYTR (158 aa). Residue 39 to 46 participates in ATP binding; that stretch reads GVTGSGKT. Residues 92–115 carry the Beta-hairpin motif; that stretch reads YYDYYQPEAYVPSSDTFIEKDASV. The Helicase C-terminal domain maps to 431-597; sequence QVDDLLSEIR…GLNKKVVDIL (167 aa). The UVR domain occupies 633–668; sequence QQKIHELEGQMMQHAQNLEFEEAAQIRDQLHQLREL.

The protein belongs to the UvrB family. Forms a heterotetramer with UvrA during the search for lesions. Interacts with UvrC in an incision complex.

Its subcellular location is the cytoplasm. In terms of biological role, the UvrABC repair system catalyzes the recognition and processing of DNA lesions. A damage recognition complex composed of 2 UvrA and 2 UvrB subunits scans DNA for abnormalities. Upon binding of the UvrA(2)B(2) complex to a putative damaged site, the DNA wraps around one UvrB monomer. DNA wrap is dependent on ATP binding by UvrB and probably causes local melting of the DNA helix, facilitating insertion of UvrB beta-hairpin between the DNA strands. Then UvrB probes one DNA strand for the presence of a lesion. If a lesion is found the UvrA subunits dissociate and the UvrB-DNA preincision complex is formed. This complex is subsequently bound by UvrC and the second UvrB is released. If no lesion is found, the DNA wraps around the other UvrB subunit that will check the other stand for damage. This Klebsiella pneumoniae (strain 342) protein is UvrABC system protein B.